A 77-amino-acid chain; its full sequence is Conotoxin G11.1 (77 aa).

An N-terminal signal peptide occupies residues 1 to 20; that stretch reads MKLFLAIVLILMLQFLSTGA. The propeptide occupies 21–45; it reads ETSDNHASRSTTALRDWLLGPKAKR. 4 disulfide bridges follow: cysteine 46–cysteine 60, cysteine 53–cysteine 65, cysteine 59–cysteine 69, and cysteine 64–cysteine 76.

The protein belongs to the conotoxin I3 superfamily. Expressed by the venom duct.

It localises to the secreted. Functionally, may embed in the membrane and bind to the voltage sensor domain of a ion channel. Does not induce paralysis when injected in fish, leading to the hypothesis that it may be part of the sedative nirvana cabal. The sequence is that of Conotoxin G11.1 from Conus geographus (Geography cone).